A 223-amino-acid polypeptide reads, in one-letter code: MPLPSVTPLHVDAFTFPPAVESPASHKRLFLGGAGKFVIVTVIGVYLEAMALPSISAKWKGKNAKELTESVPFFRQLVTGEFEKLARVTMKKRLTGIQYSEKVVENCEEIMKASGKYTRSEAKAIDQFLMVFKNQDFPPGSSIIFAICPKGSLTIAFSKEERVPKTGKAVIKNKLLGEAVLESMIGKNGVSPATRKSLAERLSKLMNKKDPYNEANVNVATKN.

Substrate contacts are provided by Thr41, Asn106, and Ser183.

It belongs to the chalcone isomerase family.

The catalysed reaction is a chalcone = a flavanone.. Its pathway is secondary metabolite biosynthesis; flavonoid biosynthesis. Catalyzes the intramolecular cyclization of bicyclic chalcones into tricyclic (S)-flavanones. Responsible for the isomerization of 4,2',4',6'-tetrahydroxychalcone (also termed chalcone) into naringenin. The sequence is that of Chalcone--flavanone isomerase 2 (CHI2) from Arabidopsis thaliana (Mouse-ear cress).